The primary structure comprises 457 residues: Serine--tRNA ligase (457 aa).

252-254 (TAE) contacts L-serine. ATP is bound by residues 283-285 (RKE) and Val-299. Glu-306 is a binding site for L-serine. 370–373 (EMVS) lines the ATP pocket. Thr-406 contributes to the L-serine binding site.

Belongs to the class-II aminoacyl-tRNA synthetase family. Type-1 seryl-tRNA synthetase subfamily. In terms of assembly, homodimer. The tRNA molecule binds across the dimer.

It is found in the cytoplasm. It catalyses the reaction tRNA(Ser) + L-serine + ATP = L-seryl-tRNA(Ser) + AMP + diphosphate + H(+). It carries out the reaction tRNA(Sec) + L-serine + ATP = L-seryl-tRNA(Sec) + AMP + diphosphate + H(+). The protein operates within aminoacyl-tRNA biosynthesis; selenocysteinyl-tRNA(Sec) biosynthesis; L-seryl-tRNA(Sec) from L-serine and tRNA(Sec): step 1/1. Functionally, catalyzes the attachment of serine to tRNA(Ser). Is also able to aminoacylate tRNA(Sec) with serine, to form the misacylated tRNA L-seryl-tRNA(Sec), which will be further converted into selenocysteinyl-tRNA(Sec). The protein is Serine--tRNA ligase of Saccharolobus islandicus (strain M.14.25 / Kamchatka #1) (Sulfolobus islandicus).